Consider the following 496-residue polypeptide: Glycerol kinase 2 (496 aa).

Thr11 provides a ligand contact to ADP. Positions 11, 12, and 13 each coordinate ATP. A sn-glycerol 3-phosphate-binding site is contributed by Thr11. Arg15 provides a ligand contact to ADP. Positions 81, 82, 133, and 242 each coordinate sn-glycerol 3-phosphate. Glycerol is bound by residues Arg81, Glu82, Tyr133, Asp242, and Gln243. The ADP site is built by Thr264 and Gly307. Positions 264, 307, 311, and 408 each coordinate ATP. ADP-binding residues include Gly408 and Asn412.

Belongs to the FGGY kinase family.

The enzyme catalyses glycerol + ATP = sn-glycerol 3-phosphate + ADP + H(+). It functions in the pathway polyol metabolism; glycerol degradation via glycerol kinase pathway; sn-glycerol 3-phosphate from glycerol: step 1/1. Inhibited by fructose 1,6-bisphosphate (FBP). Key enzyme in the regulation of glycerol uptake and metabolism. Catalyzes the phosphorylation of glycerol to yield sn-glycerol 3-phosphate. The sequence is that of Glycerol kinase 2 from Thermotoga maritima (strain ATCC 43589 / DSM 3109 / JCM 10099 / NBRC 100826 / MSB8).